The following is a 309-amino-acid chain: Branched-chain-amino-acid aminotransferase (309 aa).

Lys160 is modified (N6-(pyridoxal phosphate)lysine).

The protein belongs to the class-IV pyridoxal-phosphate-dependent aminotransferase family. As to quaternary structure, homohexamer. Pyridoxal 5'-phosphate serves as cofactor.

The catalysed reaction is L-leucine + 2-oxoglutarate = 4-methyl-2-oxopentanoate + L-glutamate. The enzyme catalyses L-isoleucine + 2-oxoglutarate = (S)-3-methyl-2-oxopentanoate + L-glutamate. It carries out the reaction L-valine + 2-oxoglutarate = 3-methyl-2-oxobutanoate + L-glutamate. It functions in the pathway amino-acid biosynthesis; L-isoleucine biosynthesis; L-isoleucine from 2-oxobutanoate: step 4/4. The protein operates within amino-acid biosynthesis; L-leucine biosynthesis; L-leucine from 3-methyl-2-oxobutanoate: step 4/4. It participates in amino-acid biosynthesis; L-valine biosynthesis; L-valine from pyruvate: step 4/4. Its function is as follows. Acts on leucine, isoleucine and valine. This Escherichia coli O157:H7 protein is Branched-chain-amino-acid aminotransferase (ilvE).